Reading from the N-terminus, the 461-residue chain is Bifunctional protein GlmU (461 aa).

The interval 1–234 (MSLSVVILAA…EIEVEGANNR (234 aa)) is pyrophosphorylase. Residues 8–11 (LAAG), Lys22, Gln77, 82–83 (GT), 104–106 (YGD), Gly141, Glu159, Asn174, and Asn232 each bind UDP-N-acetyl-alpha-D-glucosamine. Residue Asp106 participates in Mg(2+) binding. Asn232 serves as a coordination point for Mg(2+). Positions 235-255 (VQLATLERAYQARIAEELMIA) are linker. Residues 256-461 (GASLRDPARI…AGWQRPVKKS (206 aa)) form an N-acetyltransferase region. UDP-N-acetyl-alpha-D-glucosamine is bound by residues Arg338 and Lys356. The active-site Proton acceptor is the His368. UDP-N-acetyl-alpha-D-glucosamine is bound by residues Tyr371 and Asn382. Acetyl-CoA is bound by residues Ala385, 391–392 (NY), Ser410, Ala428, and Arg445.

This sequence in the N-terminal section; belongs to the N-acetylglucosamine-1-phosphate uridyltransferase family. The protein in the C-terminal section; belongs to the transferase hexapeptide repeat family. As to quaternary structure, homotrimer. Mg(2+) is required as a cofactor.

Its subcellular location is the cytoplasm. The enzyme catalyses alpha-D-glucosamine 1-phosphate + acetyl-CoA = N-acetyl-alpha-D-glucosamine 1-phosphate + CoA + H(+). It carries out the reaction N-acetyl-alpha-D-glucosamine 1-phosphate + UTP + H(+) = UDP-N-acetyl-alpha-D-glucosamine + diphosphate. Its pathway is nucleotide-sugar biosynthesis; UDP-N-acetyl-alpha-D-glucosamine biosynthesis; N-acetyl-alpha-D-glucosamine 1-phosphate from alpha-D-glucosamine 6-phosphate (route II): step 2/2. It participates in nucleotide-sugar biosynthesis; UDP-N-acetyl-alpha-D-glucosamine biosynthesis; UDP-N-acetyl-alpha-D-glucosamine from N-acetyl-alpha-D-glucosamine 1-phosphate: step 1/1. The protein operates within bacterial outer membrane biogenesis; LPS lipid A biosynthesis. Functionally, catalyzes the last two sequential reactions in the de novo biosynthetic pathway for UDP-N-acetylglucosamine (UDP-GlcNAc). The C-terminal domain catalyzes the transfer of acetyl group from acetyl coenzyme A to glucosamine-1-phosphate (GlcN-1-P) to produce N-acetylglucosamine-1-phosphate (GlcNAc-1-P), which is converted into UDP-GlcNAc by the transfer of uridine 5-monophosphate (from uridine 5-triphosphate), a reaction catalyzed by the N-terminal domain. This Colwellia psychrerythraea (strain 34H / ATCC BAA-681) (Vibrio psychroerythus) protein is Bifunctional protein GlmU.